The primary structure comprises 100 residues: Urease subunit gamma (100 aa).

This sequence belongs to the urease gamma subunit family. As to quaternary structure, heterotrimer of UreA (gamma), UreB (beta) and UreC (alpha) subunits. Three heterotrimers associate to form the active enzyme.

It localises to the cytoplasm. It catalyses the reaction urea + 2 H2O + H(+) = hydrogencarbonate + 2 NH4(+). Its pathway is nitrogen metabolism; urea degradation; CO(2) and NH(3) from urea (urease route): step 1/1. This chain is Urease subunit gamma, found in Mesorhizobium japonicum (strain LMG 29417 / CECT 9101 / MAFF 303099) (Mesorhizobium loti (strain MAFF 303099)).